The sequence spans 197 residues: Histone chaperone asf1b-A (197 aa).

The protein belongs to the ASF1 family. As to quaternary structure, interacts with histone H3 and histone H4.

The protein resides in the nucleus. Histone chaperone that facilitates histone deposition and histone exchange and removal during nucleosome assembly and disassembly. The sequence is that of Histone chaperone asf1b-A (asf1ba) from Danio rerio (Zebrafish).